The following is a 258-amino-acid chain: Acetylglutamate kinase (258 aa).

Residues G41–G42, R63, and N156 each bind substrate.

The protein belongs to the acetylglutamate kinase family. ArgB subfamily.

The protein resides in the cytoplasm. It catalyses the reaction N-acetyl-L-glutamate + ATP = N-acetyl-L-glutamyl 5-phosphate + ADP. It functions in the pathway amino-acid biosynthesis; L-arginine biosynthesis; N(2)-acetyl-L-ornithine from L-glutamate: step 2/4. In terms of biological role, catalyzes the ATP-dependent phosphorylation of N-acetyl-L-glutamate. This is Acetylglutamate kinase from Bacillus velezensis (strain DSM 23117 / BGSC 10A6 / LMG 26770 / FZB42) (Bacillus amyloliquefaciens subsp. plantarum).